Reading from the N-terminus, the 561-residue chain is Transcription factor Clamp (561 aa).

A C2H2-type 1 zinc finger spans residues 127–149 (FKCDVCSDMFPHLALLNAHKRMH). Zn(2+) contacts are provided by C129, C132, H145, and H149. The tract at residues 290 to 315 (TGGTTPKREASSGSGHHPVKKRNSQQ) is disordered. 6 consecutive C2H2-type zinc fingers follow at residues 360 to 382 (FSCN…KKLH), 388 to 410 (YKCS…ARIH), 416 to 438 (YKCQ…ERTH), 444 to 466 (YVCG…RRIH), 472 to 494 (YKCE…AKVH), and 500 to 522 (YKCE…RGIH).

In terms of assembly, homodimer. Interacts with msl-2; promoting recruitment of the male-specific lethal (MSL) histone acetyltransferase complex to chromatin. Interacts with Nelf-A. Interacts with NELF-B.

The protein resides in the nucleus. It is found in the chromosome. Transcription factor involved in X-chromosome dosage compensation in males, the process by which transcription of the single X chromosome in the male is elevated. Binds to the DNA sequence (GA)n. Clamp-binding promotes nucleosome depletion and chromatin accessibility, thereby allowing access to other transcription factors. Specifically binds to cis-acting elements on the X-chromosome named chromatin entry sites and promotes recruitment of the male-specific lethal (MSL) histone acetyltransferase complex, which associates with actively transcribed genes on the male X-chromosome to upregulate their expression. Mechanistically, acts by promoting chromatin accessibility at chromatin entry sites, facilitating DNA-binding of msl-2, followed by MSL complex recruitment. In addition to dosage compensation, also involved in zygotic genome activation (ZGA), a critical event in early embryonic development during which the developmental control passes from maternally provided mRNAs to the expression of the zygotic genome after fertilization. Maternally-provided protein cooperates with Zelda (zld) to activate zygotic transcription by increasing chromatin accessibility at promoters of specific genes and facilitate zld occupancy at a subset of key embryonic promoters. Also acts as an activator of gypsy chromatin insulator function by promoting binding of Cp190 to chromatin. This is Transcription factor Clamp from Drosophila melanogaster (Fruit fly).